A 598-amino-acid polypeptide reads, in one-letter code: Probable translation initiation factor IF-2 (598 aa).

In terms of domain architecture, tr-type G spans 3–225; sequence LRCPIVSVLG…GLAQKFLEQK (223 aa). Positions 12–19 are G1; the sequence is GHVDHGKT. 12–19 is a binding site for GTP; that stretch reads GHVDHGKT. The segment at 37 to 41 is G2; sequence GITQH. The segment at 76–79 is G3; that stretch reads DTPG. GTP contacts are provided by residues 76–80 and 130–133; these read DTPGH and NKLD. The interval 130–133 is G4; it reads NKLD. Residues 200 to 202 form a G5 region; that stretch reads SAM.

This sequence belongs to the TRAFAC class translation factor GTPase superfamily. Classic translation factor GTPase family. IF-2 subfamily.

Its function is as follows. Function in general translation initiation by promoting the binding of the formylmethionine-tRNA to ribosomes. Seems to function along with eIF-2. The protein is Probable translation initiation factor IF-2 of Methanococcus maripaludis (strain C6 / ATCC BAA-1332).